We begin with the raw amino-acid sequence, 691 residues long: CREB-regulated transcription coactivator 2 (691 aa).

The segment covering 1–20 (MATSGANGPGSATASASNPR) has biased composition (polar residues). The interval 1–30 (MATSGANGPGSATASASNPRKFSEKIALQK) is disordered. Ala-2 carries the N-acetylalanine modification. Arg-51 is subject to Asymmetric dimethylarginine; by PRMT6. 3 positions are modified to phosphoserine: Ser-70, Ser-86, and Ser-90. Asymmetric dimethylarginine; by PRMT6 is present on residues Arg-99, Arg-120, and Arg-123. At Ser-136 the chain carries Phosphoserine. Residues Arg-161 and Arg-168 each carry the asymmetric dimethylarginine; by PRMT6 modification. Thr-169 carries the post-translational modification Phosphothreonine. Phosphoserine; by AMPK, MARK2, SIK1 and SIK2 is present on Ser-171. Residues 174–186 (ALHTSVMNPNPQD) are compositionally biased toward polar residues. The tract at residues 174–195 (ALHTSVMNPNPQDTYPGPTPPS) is disordered. Thr-192 is subject to Phosphothreonine. Lys-234 is covalently cross-linked (Glycyl lysine isopeptide (Lys-Gly) (interchain with G-Cter in SUMO2)). Positions 271–287 (TGGSLPDLTNLHFPPPL) match the Nuclear export signal motif. Ser-274 carries the post-translational modification Phosphoserine; by MARK2. Disordered regions lie at residues 280-306 (NLHF…GGNS) and 335-491 (HSPL…YSPP). Ser-306, Ser-368, Ser-393, Ser-433, and Ser-456 each carry phosphoserine. Composition is skewed to low complexity over residues 335–383 (HSPL…HALP) and 390–411 (PSLS…SPVL). A compositionally biased stretch (polar residues) spans 447–468 (SQQQLPKQFSPTMSPTLSSITQ). Phosphotyrosine is present on Tyr-488. A phosphoserine mark is found at Ser-489 and Ser-492. The residue at position 501 (Thr-501) is a Phosphothreonine. The disordered stretch occupies residues 513 to 543 (CLVQPSGGQPPGRQPHYGTLYPPGSSGHGQQ). Phosphoserine occurs at positions 611, 621, and 622.

Belongs to the TORC family. As to quaternary structure, binds, as a tetramer, through its N-terminal region, with the bZIP domain of CREB1. 'Arg-314' in the bZIP domain of CREB1 is essential for this interaction. Interaction, via its C-terminal, with TAF4, enhances recruitment of TAF4 to CREB1. Interacts with SIK2. Interacts with 14-3-3 proteins, YWHAB and YWHAG. Interacts (probably when phosphorylated at Ser-171) with YWHAE. Interacts with calmodulin-dependent catalytic subunit PPP3CA/calcineurin A. Interaction with COP1 mediates nuclear export and degradation of CRTC2. Phosphorylation/dephosphorylation states of Ser-171 are required for regulating transduction of CREB activity. CRTCs/TORCs are inactive when phosphorylated, and active when dephosphorylated at this site. This primary site of phosphorylation, is regulated by cAMP and calcium levels and is dependent on the phosphorylation of SIKs (SIK1 and SIK2) by LKB1. Following adenylyl cyclase activation, dephosphorylated at Ser-171 by PPP3CA/calcineurin A resulting in CRTC2 dissociation from 14-3-3 proteins and PPP3CA. Both insulin and AMPK increase this phosphorylation of CRTC2 while glucagon suppresses it. Phosphorylation at Ser-274 by MARK2 is induced under low glucose conditions and dephosphorylated in response to glucose influx. Phosphorylation at Ser-274 promotes interaction with 14-3-3 proteins and translocation to the cytoplasm. Post-translationally, asymmetric dimethylation of arginine resisues by PRMT6 enhances the association of CRTC2 with CREB on the promoters of gluconeogenic genes.

It localises to the cytoplasm. The protein localises to the nucleus. Transcriptional coactivator for CREB1 which activates transcription through both consensus and variant cAMP response element (CRE) sites. Acts as a coactivator, in the SIK/TORC signaling pathway, being active when dephosphorylated and acts independently of CREB1 'Ser-133' phosphorylation. Enhances the interaction of CREB1 with TAF4. Regulates gluconeogenesis as a component of the LKB1/AMPK/TORC2 signaling pathway. Regulates the expression of specific genes such as the steroidogenic gene, StAR. Potent coactivator of PPARGC1A and inducer of mitochondrial biogenesis in muscle cells. This is CREB-regulated transcription coactivator 2 (Crtc2) from Rattus norvegicus (Rat).